The following is a 444-amino-acid chain: Trigger factor (444 aa).

A PPIase FKBP-type domain is found at 165 to 250 (GDFAKFDFEG…LHEIQELKIP (86 aa)).

Belongs to the FKBP-type PPIase family. Tig subfamily.

It is found in the cytoplasm. The catalysed reaction is [protein]-peptidylproline (omega=180) = [protein]-peptidylproline (omega=0). Functionally, involved in protein export. Acts as a chaperone by maintaining the newly synthesized protein in an open conformation. Functions as a peptidyl-prolyl cis-trans isomerase. In Campylobacter jejuni subsp. jejuni serotype O:2 (strain ATCC 700819 / NCTC 11168), this protein is Trigger factor (tig).